The sequence spans 808 residues: MGDILAYEADLLGLVKEFLNFGEFQETLETFTKECKTKGKQLPKTSGLALRESKTLLIQKDLITAFEDGDIKEFFALWQEHIPVETQNTNPVAQKLEFYLQIHFAIFPLKHNQGRIDRTDCEERISHFKTYLETSGAALSQTTEFLPFYALPFVPHPAAHPSFKEIFQESWEAELRMRLEKFLSVILKATSTPRLITLYKESLHNNQELLQQLQQQLMETEHKARTYKKCFNRMQSDYHNLIGVTADLVDSLEATINGKLITPEYLQSVCTRLFSTQMKQSSAQSIDFTRPGTASSMLRASIAPLKQQEVPLFPSLDYEKLKKDLVFGNDRLKALILQALRWRLTRSQPGEQRNTVLQAYISNDLLDCHHNEQKNVLMLLRSPSEVVRQYTALLIDVFSSLAYGRVYISQNPRLLHSLVETWKAEEKESVIRETVLGILQKLSLRRSMQSAMIKDDLIFWLVQELEDTDHLSDYALQYTIALFMNLCLRSAGRKMCSRDADHVLKVLSDLLGHENHEIRSYVNGALYSILAVPSIREEARSMGMEEILRWYIREGNTDMNCHIEFIIKQLNSEDKFDESIESDDEEEEKDDEEDEDALEADLDKDEIIYAQSGELAGEKLLTTDYLGIMTNSFKVKKRMFGGVLQSADEPLQRPVTPSTHRVMNTVRKTSGPPSPPTNTFKTSQANMSVVSSRPPTRSGSRASTSDYCVTSDSIDSEASRLFSPSSQADQRGASSPRILDLGMEKHNGQNSSKAWLPRSPEVLSATSRKARTPTIAPQFSQSGPQQTSYSSSAGSSTRSRQSTQSYRK.

A LisH domain is found at 7–39 (YEADLLGLVKEFLNFGEFQETLETFTKECKTKG). The stretch at 196-230 (ITLYKESLHNNQELLQQLQQQLMETEHKARTYKKC) forms a coiled coil. Disordered regions lie at residues 576-599 (FDES…DALE), 650-709 (PLQR…DYCV), and 742-808 (GMEK…SYRK). Positions 579–599 (SIESDDEEEEKDDEEDEDALE) are enriched in acidic residues. 3 stretches are compositionally biased toward polar residues: residues 655–668 (VTPS…TVRK), 677–709 (TNTF…DYCV), and 775–784 (IAPQFSQSGP). A compositionally biased stretch (low complexity) spans 785–808 (QQTSYSSSAGSSTRSRQSTQSYRK).

It is found in the cytoplasm. Its subcellular location is the cytoskeleton. The protein localises to the cilium basal body. It localises to the cell projection. The protein resides in the cilium. It is found in the microtubule organizing center. Its subcellular location is the centrosome. The protein localises to the centriole. Functionally, involved in ciliogenesis. It is required for appropriate acetylation and polyglutamylation of ciliary microtubules, and regulation of cilium length. Acts as a positive regulator of hedgehog (Hh)signaling. In Xenopus tropicalis (Western clawed frog), this protein is LisH domain-containing protein ARMC9 (armc9).